The following is a 500-amino-acid chain: Hexose transporter 1 (500 aa).

Over 1–25 the chain is Cytoplasmic; the sequence is MKNSNEISSSQSLKNNGSDGFFNTS. Residues 26–46 form a helical membrane-spanning segment; it reads LMYVLAACLASFLFGYQVSVL. Over 47–75 the chain is Extracellular; that stretch reads NTIKDFIVIEFGWCAGKEVNCDDSTLKSS. Residues cysteine 60 and cysteine 67 are joined by a disulfide bond. A helical transmembrane segment spans residues 76–96; sequence FLLASVFIGAVVGSGFSGFLV. The Cytoplasmic portion of the chain corresponds to 97-101; that stretch reads QHGRR. The chain crosses the membrane as a helical span at residues 102–122; that stretch reads FSLLVIYNFFILVSILTSITH. The Extracellular portion of the chain corresponds to 123–131; it reads HFHTILFSR. A helical membrane pass occupies residues 132 to 152; it reads LLSGFGIGLITVSVPMYISEM. Over 153 to 166 the chain is Cytoplasmic; the sequence is THKDKKGAYGVLHQ. Glutamine 166 provides a ligand contact to alpha-D-glucose. Glutamine 166 is a beta-D-glucose binding site. The helical transmembrane segment at 167–187 threads the bilayer; it reads LFITFGIFIAVLLGMAMGNVP. The Extracellular portion of the chain corresponds to 188 to 203; the sequence is EEVNNPLGTFQQIWWR. Residues 204-224 traverse the membrane as a helical segment; sequence LMFFFPCIISILGIVLLTFFF. Topologically, residues 225 to 289 are cytoplasmic; it reads KEETPYYLFE…RAMKIPSYRY (65 aa). A helical membrane pass occupies residues 290–310; that stretch reads VILLGCILSGLQQFTGINVLV. The alpha-D-glucose site is built by glutamine 301, glutamine 302, and asparagine 307. Glutamine 301 lines the beta-D-glucose pocket. Asparagine 307 is a beta-D-glucose binding site. Residues 311–327 lie on the Extracellular side of the membrane; it reads SNSNALYKGFLTNEWIT. Residues 328 to 348 traverse the membrane as a helical segment; that stretch reads TLSVIMTVVNFLMTFPAIYIV. Asparagine 337 lines the beta-D-glucose pocket. At 349-356 the chain is on the cytoplasmic side; that stretch reads EKLGRKTL. Residues 357-377 form a helical membrane-spanning segment; it reads LLCGCAGIVCAFLPTAIANLI. Residues 378–390 are Extracellular-facing; that stretch reads NNTSDVVKKLSIS. Residues 391–411 traverse the membrane as a helical segment; sequence ATFVMIVSFAVSYGPVLWIYL. Alpha-D-glucose is bound at residue tryptophan 408. Residues 412 to 425 are Cytoplasmic-facing; sequence HEMFPSEIKDSAAS. The chain crosses the membrane as a helical span at residues 426–446; that stretch reads LASLVNWMCAIIVVFPSDIII. The Extracellular segment spans residues 447–451; the sequence is KQSPT. The chain crosses the membrane as a helical span at residues 452–472; that stretch reads ILFFIFSGMSIVAFLFIFFFI. Over 473 to 500 the chain is Cytoplasmic; that stretch reads KETKGGEIGTSPYITLEERQKHMGKSVV.

Belongs to the major facilitator superfamily. Sugar transporter (TC 2.A.1.1) family. As to quaternary structure, homodimer.

Its subcellular location is the cell membrane. It catalyses the reaction D-glucose(out) = D-glucose(in). The enzyme catalyses D-fructose(out) = D-fructose(in). It carries out the reaction D-galactose(in) = D-galactose(out). The catalysed reaction is D-mannose(out) = D-mannose(in). It catalyses the reaction D-glucosamine(out) = D-glucosamine(in). The enzyme catalyses D-xylose(out) = D-xylose(in). Inhibited by cytochalasin B. Sodium-independent facilitative hexose transporter. Can transport D-glucose and D-fructose. Can transport D-mannose, D-galactose, D-xylose and D-glucosamine. In Plasmodium knowlesi, this protein is Hexose transporter 1.